The chain runs to 304 residues: Acetyl-coenzyme A carboxylase carboxyl transferase subunit beta (304 aa).

One can recognise a CoA carboxyltransferase N-terminal domain in the interval 23–292 (VWTKCDSCGQ…PNPEAPREGV (270 aa)). Zn(2+)-binding residues include cysteine 27, cysteine 30, cysteine 46, and cysteine 49. The C4-type zinc-finger motif lies at 27 to 49 (CDSCGQVLYRAELERNLEVCPKC). Residues 284–304 (NPEAPREGVVVPPVPDQEPEA) are disordered. Positions 295–304 (PPVPDQEPEA) are enriched in pro residues.

It belongs to the AccD/PCCB family. In terms of assembly, acetyl-CoA carboxylase is a heterohexamer composed of biotin carboxyl carrier protein (AccB), biotin carboxylase (AccC) and two subunits each of ACCase subunit alpha (AccA) and ACCase subunit beta (AccD). Zn(2+) is required as a cofactor.

It localises to the cytoplasm. The enzyme catalyses N(6)-carboxybiotinyl-L-lysyl-[protein] + acetyl-CoA = N(6)-biotinyl-L-lysyl-[protein] + malonyl-CoA. It functions in the pathway lipid metabolism; malonyl-CoA biosynthesis; malonyl-CoA from acetyl-CoA: step 1/1. Functionally, component of the acetyl coenzyme A carboxylase (ACC) complex. Biotin carboxylase (BC) catalyzes the carboxylation of biotin on its carrier protein (BCCP) and then the CO(2) group is transferred by the transcarboxylase to acetyl-CoA to form malonyl-CoA. In Escherichia coli O139:H28 (strain E24377A / ETEC), this protein is Acetyl-coenzyme A carboxylase carboxyl transferase subunit beta.